A 1141-amino-acid polypeptide reads, in one-letter code: PR domain zinc finger protein 15 (1141 aa).

In terms of domain architecture, SET spans 49 to 159 (PNLEIRRLED…PGTELRVWYA (111 aa)). The C2H2-type 1 zinc finger occupies 197–219 (WACKVCSATFLELQLLNEHLLGH). The interval 224-283 (KSLPPGSQSEAAAPEKEQDTPRGEPPAVPESENVATKEQKKKPRRGRKPKVSKAEQPLVI) is disordered. Basic and acidic residues predominate over residues 236–245 (APEKEQDTPR). The segment covering 262 to 274 (QKKKPRRGRKPKV) has biased composition (basic residues). 4 C2H2-type zinc fingers span residues 372 to 394 (YQCN…VRSH), 399 to 422 (FKCE…SYKH), 460 to 482 (FQCE…KKKH), and 487 to 509 (FACE…QRRH). Lys-517 participates in a covalent cross-link: Glycyl lysine isopeptide (Lys-Gly) (interchain with G-Cter in SUMO2). 2 consecutive C2H2-type zinc fingers follow at residues 536–558 (SGCP…LLTH) and 563–585 (YTCE…IHVH). A disordered region spans residues 604–623 (IGISSEENDDNSDESADSEP). A compositionally biased stretch (acidic residues) spans 609–620 (EENDDNSDESAD). 9 consecutive C2H2-type zinc fingers follow at residues 626-649 (YSCK…MEVH), 654-676 (YGCS…MVIH), 690-712 (HPCE…KLIH), 718-740 (HACE…MRVH), 746-768 (YLCA…MKLH), 774-796 (YECK…CKRH), 802-824 (FMCE…KLIH), 830-853 (WTCS…QLTH), and 859-882 (QSCQ…RRKH). 2 disordered regions span residues 922 to 973 (AEGK…DETN) and 1108 to 1141 (QTDV…MYSY). Residues 927 to 938 (GKAAKRSHKRKQ) are compositionally biased toward basic residues. A compositionally biased stretch (low complexity) spans 1121–1141 (PQQAAQPQVQAEQQQQQMYSY).

Belongs to the class V-like SAM-binding methyltransferase superfamily. Detected in all tissues examined.

The protein localises to the nucleus. Functionally, sequence-specific DNA-binding transcriptional regulator. Plays a role as a molecular node in a transcriptional network regulating embryonic development and cell fate decision. Stimulates the expression of upstream key transcriptional activators and repressors of the Wnt/beta-catenin and MAPK/ERK pathways, respectively, that are essential for naive pluripotency and self-renewal maintenance of embryonic stem cells (ESCs). Specifically promotes SPRY1 and RSPO1 transcription activation through recognition and direct binding of a specific DNA sequence in their promoter regions. Involved in early embryo development. Also plays a role in induced pluripotent stem cells (iPSCs) reprogramming. The sequence is that of PR domain zinc finger protein 15 from Homo sapiens (Human).